A 411-amino-acid polypeptide reads, in one-letter code: Argininosuccinate lyase (411 aa).

This sequence belongs to the lyase 1 family. Argininosuccinate lyase subfamily.

It is found in the cytoplasm. It carries out the reaction 2-(N(omega)-L-arginino)succinate = fumarate + L-arginine. The protein operates within amino-acid biosynthesis; L-arginine biosynthesis; L-arginine from L-ornithine and carbamoyl phosphate: step 3/3. This chain is Argininosuccinate lyase, found in Legionella pneumophila subsp. pneumophila (strain Philadelphia 1 / ATCC 33152 / DSM 7513).